A 151-amino-acid polypeptide reads, in one-letter code: Transcriptional regulator MraZ (151 aa).

SpoVT-AbrB domains are found at residues 5 to 52 and 81 to 124; these read ANAI…PLSE and AVDL…DEDA.

This sequence belongs to the MraZ family. In terms of assembly, forms oligomers.

The protein resides in the cytoplasm. It localises to the nucleoid. The sequence is that of Transcriptional regulator MraZ from Pseudomonas savastanoi pv. phaseolicola (strain 1448A / Race 6) (Pseudomonas syringae pv. phaseolicola (strain 1448A / Race 6)).